The chain runs to 198 residues: Protein-L-isoaspartate O-methyltransferase (198 aa).

S50 is a catalytic residue.

It belongs to the methyltransferase superfamily. L-isoaspartyl/D-aspartyl protein methyltransferase family.

It is found in the cytoplasm. It catalyses the reaction [protein]-L-isoaspartate + S-adenosyl-L-methionine = [protein]-L-isoaspartate alpha-methyl ester + S-adenosyl-L-homocysteine. In terms of biological role, catalyzes the methyl esterification of L-isoaspartyl residues in peptides and proteins that result from spontaneous decomposition of normal L-aspartyl and L-asparaginyl residues. It plays a role in the repair and/or degradation of damaged proteins. In Thermosipho melanesiensis (strain DSM 12029 / CIP 104789 / BI429), this protein is Protein-L-isoaspartate O-methyltransferase.